Reading from the N-terminus, the 655-residue chain is Archaeal Lon protease (655 aa).

Topologically, residues 1-123 (MEENIESVEE…KAEREKRDRS (123 aa)) are cytoplasmic. Residue 57–64 (GEPGTGKS) participates in ATP binding. A helical transmembrane segment spans residues 124 to 144 (RSIMFVIFSVVLLGIIAAIVL). Position 145 (arginine 145) is a topological domain, extracellular. A helical membrane pass occupies residues 146 to 166 (SITLIFFAIMAAAFLYMAMAF). Topologically, residues 167–655 (NPVIRNEKAM…ASTRAGQNVA (489 aa)) are cytoplasmic. A Lon proteolytic domain is found at 433–618 (GSVVGMVNGL…EDVLKVALVN (186 aa)). Residues serine 525 and lysine 568 contribute to the active site.

It belongs to the peptidase S16 family. Archaeal LonB subfamily. Homohexamer. Organized in a ring with a central cavity.

It is found in the cell membrane. ATP-dependent serine protease that mediates the selective degradation of mutant and abnormal proteins as well as certain short-lived regulatory proteins. Degrades polypeptides processively. In Thermoplasma volcanium (strain ATCC 51530 / DSM 4299 / JCM 9571 / NBRC 15438 / GSS1), this protein is Archaeal Lon protease.